Here is a 256-residue protein sequence, read N- to C-terminus: Photosystem I chlorophyll a/b-binding protein 5, chloroplastic (256 aa).

The N-terminal 32 residues, 1–32 (MAVVLRGGITGGFLHHRRDASSVITRRISSVK), are a transit peptide targeting the chloroplast. At A33 the chain carries N-acetylalanine. W49 provides a ligand contact to chlorophyll b. Residues F69 and E88 each contribute to the chlorophyll a site. R93 contributes to the chlorophyll b binding site. The next 2 helical transmembrane spans lie at 94–113 (FAMLGVAGILFTDLLRTTGI) and 129–146 (FASTKTLIVVQFLLMGFA). 2 residues coordinate chlorophyll b: E147 and R150. K205, E206, N209, R211, Q223, and H238 together coordinate chlorophyll a. A helical membrane pass occupies residues 212-232 (LAMMAMLGFFVQASVTHTGPI).

This sequence belongs to the light-harvesting chlorophyll a/b-binding (LHC) protein family. The LHC complex consists of chlorophyll a-b binding proteins. Homodimer. Heterodimer with LHCA2 and, possibly, LHCA3. Can substitute to LHCA4 to form a complex with LHCA1. Binds pigments. Element of the NAD(P)H dehydrogenase-photosystem I supercomplex (NDH-PSI). The cofactor is Binds at least 14 chlorophylls (8 Chl-a and 6 Chl-b) and carotenoids such as lutein and neoxanthin.. Post-translationally, photoregulated by reversible phosphorylation of its threonine residues.

It localises to the plastid. The protein localises to the chloroplast thylakoid membrane. Its function is as follows. The light-harvesting complex (LHC) functions as a light receptor, it captures and delivers excitation energy to photosystems with which it is closely associated. Seems involved in the function of the photosystem I in low light conditions, when other LHCA proteins are less abundant. Required, together with LHCA6, for the formation of a full-size NAD(P)H dehydrogenase-photosystem I supercomplex (NDH-PSI) that triggers cyclic and chlororespiratory electron transport in chloroplast thylakoids, especially under stress conditions (e.g. increased light intensity). This Arabidopsis thaliana (Mouse-ear cress) protein is Photosystem I chlorophyll a/b-binding protein 5, chloroplastic.